The sequence spans 51 residues: MASDMLCCQGGTFRHDGCHDKGRTGPGPGVAAPADMLGWVRSSAVSSRSAP.

It belongs to the PhoAT antitoxin family. As to quaternary structure, interacts with toxin PhoH2.

Functionally, antitoxin component of a type II toxin-antitoxin (TA) system. The cognate antitoxin is PhoAT; the toxin gene cannot be expressed in the absence of the antitoxin gene in M.smegmatis (strain mc(2)4517), and abrogates the toxic effects of PhoH2 in M.smegmatis strain mc(2)155. The polypeptide is Probable antitoxin PhoAT (Mycobacterium tuberculosis (strain ATCC 25618 / H37Rv)).